The following is a 235-amino-acid chain: Aspartate/glutamate leucyltransferase (235 aa).

Belongs to the R-transferase family. Bpt subfamily.

The protein resides in the cytoplasm. It carries out the reaction N-terminal L-glutamyl-[protein] + L-leucyl-tRNA(Leu) = N-terminal L-leucyl-L-glutamyl-[protein] + tRNA(Leu) + H(+). The catalysed reaction is N-terminal L-aspartyl-[protein] + L-leucyl-tRNA(Leu) = N-terminal L-leucyl-L-aspartyl-[protein] + tRNA(Leu) + H(+). Its function is as follows. Functions in the N-end rule pathway of protein degradation where it conjugates Leu from its aminoacyl-tRNA to the N-termini of proteins containing an N-terminal aspartate or glutamate. The protein is Aspartate/glutamate leucyltransferase of Stutzerimonas stutzeri (strain A1501) (Pseudomonas stutzeri).